The following is a 668-amino-acid chain: MKHYSIQPANLEFNAEGTPVSRDFDDVYFSNDNGLEETRYVFLGGNQLEVRFPEHPHPLFVVAESGFGTGLNFLTLWQAFDQFREAHPQAQLQRLHFISFEKFPLTRADLALAHQHWPELAPWAEQLQAQWPMPLPGCHRLLLDEGRVTLDLWFGDINELTSQQDDSLNQKVDAWFLDGFAPAKNPDMWTQNLFNAMARLARPGGTLATFTSAGFVRRGLQDAGFTMQKRKGFGRKREMLCGVMEQTLPLPCSAPWFNRTGSSKREAAIIGGGIACALLSLALLRRGWQVTLYCADEAPALGASGNRQGALYPLLSKHDEALNRFFSNAFTFARRFYDQLPVKFDHDWCGVTQLGWDEKSQHKIAQMLSMDLPAELAVAVEANAVEQITGVATNCSGITYPQGGWLCPAELTRNVLELAQQQGLQIYYQYQLQNLSRKDDCWLLNFAGDQQATHSVVVLANGHQISRFSQTSTLPVYSVAGQVSHIPTTPELAELKQVLCYDGYLTPQNPANQHHCIGASYHRGSEDTAYSEDDQQQNRQRLIDCFPQAQWAKEVDVSDKEARCGVRCATRDHLPMVGNVPDYEATLVEYASLAEQKDEAVSAPVFDDLFMFAALGSRGLCSAPLCAEILAAQMSDEPIPMDASTLAALNPNRLWVRKLLKGKAVKAG.

The tract at residues Met1 to Glu245 is tRNA (mnm(5)s(2)U34)-methyltransferase. Residues Ile270 to Gly668 are FAD-dependent cmnm(5)s(2)U34 oxidoreductase.

The protein in the N-terminal section; belongs to the methyltransferase superfamily. tRNA (mnm(5)s(2)U34)-methyltransferase family. It in the C-terminal section; belongs to the DAO family. FAD is required as a cofactor.

Its subcellular location is the cytoplasm. It catalyses the reaction 5-aminomethyl-2-thiouridine(34) in tRNA + S-adenosyl-L-methionine = 5-methylaminomethyl-2-thiouridine(34) in tRNA + S-adenosyl-L-homocysteine + H(+). In terms of biological role, catalyzes the last two steps in the biosynthesis of 5-methylaminomethyl-2-thiouridine (mnm(5)s(2)U) at the wobble position (U34) in tRNA. Catalyzes the FAD-dependent demodification of cmnm(5)s(2)U34 to nm(5)s(2)U34, followed by the transfer of a methyl group from S-adenosyl-L-methionine to nm(5)s(2)U34, to form mnm(5)s(2)U34. This is tRNA 5-methylaminomethyl-2-thiouridine biosynthesis bifunctional protein MnmC from Shigella boydii serotype 4 (strain Sb227).